The primary structure comprises 152 residues: Cyanate hydratase (152 aa).

Active-site residues include R98, E101, and S124.

The protein belongs to the cyanase family.

The catalysed reaction is cyanate + hydrogencarbonate + 3 H(+) = NH4(+) + 2 CO2. Its function is as follows. Catalyzes the reaction of cyanate with bicarbonate to produce ammonia and carbon dioxide. The sequence is that of Cyanate hydratase from Uncinocarpus reesii (strain UAMH 1704).